The sequence spans 549 residues: Glucose-6-phosphate isomerase (549 aa).

The active-site Proton donor is the E355. Residues H387 and K515 contribute to the active site.

It belongs to the GPI family.

The protein resides in the cytoplasm. The enzyme catalyses alpha-D-glucose 6-phosphate = beta-D-fructose 6-phosphate. The protein operates within carbohydrate biosynthesis; gluconeogenesis. Its pathway is carbohydrate degradation; glycolysis; D-glyceraldehyde 3-phosphate and glycerone phosphate from D-glucose: step 2/4. Catalyzes the reversible isomerization of glucose-6-phosphate to fructose-6-phosphate. This is Glucose-6-phosphate isomerase from Haemophilus influenzae (strain PittEE).